We begin with the raw amino-acid sequence, 465 residues long: Lactaldehyde dehydrogenase (465 aa).

220-225 (GSVEIG) is a binding site for NAD(+). Residues E240 and C274 contribute to the active site.

The protein belongs to the aldehyde dehydrogenase family. Homotetramer.

It carries out the reaction (S)-lactaldehyde + NAD(+) + H2O = (S)-lactate + NADH + 2 H(+). Its pathway is cofactor biosynthesis; coenzyme F420 biosynthesis. Its function is as follows. Involved in F420 biosynthesis through the oxidation of lactaldehyde to lactate. This Methanococcus maripaludis (strain C7 / ATCC BAA-1331) protein is Lactaldehyde dehydrogenase.